Here is a 323-residue protein sequence, read N- to C-terminus: Aspartate carbamoyltransferase catalytic subunit (323 aa).

Positions 68 and 69 each coordinate carbamoyl phosphate. An L-aspartate-binding site is contributed by Lys96. Residues Arg118, His148, and Gln151 each contribute to the carbamoyl phosphate site. L-aspartate-binding residues include Arg181 and Arg236. Residues Gly277 and Pro278 each coordinate carbamoyl phosphate.

Belongs to the aspartate/ornithine carbamoyltransferase superfamily. ATCase family. As to quaternary structure, heterododecamer (2C3:3R2) of six catalytic PyrB chains organized as two trimers (C3), and six regulatory PyrI chains organized as three dimers (R2).

It carries out the reaction carbamoyl phosphate + L-aspartate = N-carbamoyl-L-aspartate + phosphate + H(+). Its pathway is pyrimidine metabolism; UMP biosynthesis via de novo pathway; (S)-dihydroorotate from bicarbonate: step 2/3. Its function is as follows. Catalyzes the condensation of carbamoyl phosphate and aspartate to form carbamoyl aspartate and inorganic phosphate, the committed step in the de novo pyrimidine nucleotide biosynthesis pathway. In Verminephrobacter eiseniae (strain EF01-2), this protein is Aspartate carbamoyltransferase catalytic subunit.